Reading from the N-terminus, the 721-residue chain is Cell wall protein RBT1 (721 aa).

The signal sequence occupies residues 1–20 (MRFATAQLAALAYYILSTEA). Positions 55-278 (GSKNKREAEI…DCQCDTPSPS (224 aa)) constitute a Flo11 domain. 3 disordered regions span residues 278–410 (STTT…LTTT), 453–510 (LTET…TVTE), and 555–666 (TPAT…ALVS). Over residues 454 to 499 (TETTPVPSSVDSTSVTSAPETTPESTAPESSAPESSAPESSAPVTE) the composition is skewed to low complexity. Residues 500–510 (TPTGPVSTVTE) show a composition bias toward polar residues. Low complexity-rich tracts occupy residues 555 to 575 (TPAT…VPAT) and 584 to 663 (SSAP…KTSA). Ser-696 carries the GPI-anchor amidated serine lipid modification. A propeptide spans 697–721 (SFEGAGNNMRLTYGAAIIGLAAFLI) (removed in mature form).

It belongs to the HWP1 family. In terms of processing, the GPI-anchor is attached to the protein in the endoplasmic reticulum and serves to target the protein to the cell surface. There, the glucosamine-inositol phospholipid moiety is cleaved off and the GPI-modified mannoprotein is covalently attached via its lipidless GPI glycan remnant to the 1,6-beta-glucan of the outer cell wall layer.

It localises to the secreted. The protein localises to the cell wall. Its subcellular location is the membrane. GPI-anchored cell wall protein required for mating efficiency, biofilm formation, and virulence. Involved in normal disseminated infection, but not in intestinal colonization. The chain is Cell wall protein RBT1 (RBT1) from Candida albicans (strain SC5314 / ATCC MYA-2876) (Yeast).